The sequence spans 256 residues: Acetyl-coenzyme A carboxylase carboxyl transferase subunit alpha (256 aa).

The 236-residue stretch at 1–236 (MTDVARILKE…KEHLKTEINQ (236 aa)) folds into the CoA carboxyltransferase C-terminal domain.

Belongs to the AccA family. As to quaternary structure, acetyl-CoA carboxylase is a heterohexamer composed of biotin carboxyl carrier protein (AccB), biotin carboxylase (AccC) and two subunits each of ACCase subunit alpha (AccA) and ACCase subunit beta (AccD).

The protein localises to the cytoplasm. It catalyses the reaction N(6)-carboxybiotinyl-L-lysyl-[protein] + acetyl-CoA = N(6)-biotinyl-L-lysyl-[protein] + malonyl-CoA. Its pathway is lipid metabolism; malonyl-CoA biosynthesis; malonyl-CoA from acetyl-CoA: step 1/1. Functionally, component of the acetyl coenzyme A carboxylase (ACC) complex. First, biotin carboxylase catalyzes the carboxylation of biotin on its carrier protein (BCCP) and then the CO(2) group is transferred by the carboxyltransferase to acetyl-CoA to form malonyl-CoA. The sequence is that of Acetyl-coenzyme A carboxylase carboxyl transferase subunit alpha from Streptococcus uberis (strain ATCC BAA-854 / 0140J).